The chain runs to 104 residues: Large ribosomal subunit protein bL21 (104 aa).

This sequence belongs to the bacterial ribosomal protein bL21 family. In terms of assembly, part of the 50S ribosomal subunit. Contacts protein L20.

Functionally, this protein binds to 23S rRNA in the presence of protein L20. This chain is Large ribosomal subunit protein bL21, found in Helicobacter pylori (strain P12).